Consider the following 652-residue polypeptide: Beta-mannosyltransferase 1 (652 aa).

Topologically, residues 1 to 15 (MVDLFQWLKFYSMRR) are cytoplasmic. Residues 16–34 (LGQVAITLVLLNLFVFLGY) form a helical membrane-spanning segment. Topologically, residues 35–652 (KFTPSTVIGS…LYQLQEEERS (618 aa)) are extracellular. A glycan (N-linked (GlcNAc...) asparagine) is linked at Asn-57. The stretch at 535 to 652 (PARYAKQMEN…LYQLQEEERS (118 aa)) forms a coiled coil. Residues 536 to 621 (ARYAKQMENE…EAKENEAKKK (86 aa)) are disordered.

Belongs to the BMT family.

The protein localises to the membrane. Its function is as follows. Beta-mannosyltransferase involved in cell wall biosynthesis. Involved in the beta-mannosylation of outer chains of N-glycans. In Komagataella phaffii (strain ATCC 76273 / CBS 7435 / CECT 11047 / NRRL Y-11430 / Wegner 21-1) (Yeast), this protein is Beta-mannosyltransferase 1 (BMT1).